A 341-amino-acid polypeptide reads, in one-letter code: Heme A synthase (341 aa).

8 helical membrane-spanning segments follow: residues 7–27 (VTVW…IGGI), 92–112 (LFGR…AITK), 118–138 (MVAK…MGWF), 159–179 (LFLT…CAGV), 190–210 (FFTA…GALV), 253–273 (FLHR…PFWL), 280–300 (LFLA…VSVV), and 302–322 (IFLA…GVHM). His-255 is a heme binding site. A heme-binding site is contributed by His-308.

It belongs to the COX15/CtaA family. Type 2 subfamily. As to quaternary structure, interacts with CtaB. Heme b is required as a cofactor.

The protein resides in the cell membrane. The catalysed reaction is Fe(II)-heme o + 2 A + H2O = Fe(II)-heme a + 2 AH2. The protein operates within porphyrin-containing compound metabolism; heme A biosynthesis; heme A from heme O: step 1/1. Functionally, catalyzes the conversion of heme O to heme A by two successive hydroxylations of the methyl group at C8. The first hydroxylation forms heme I, the second hydroxylation results in an unstable dihydroxymethyl group, which spontaneously dehydrates, resulting in the formyl group of heme A. The sequence is that of Heme A synthase from Anaplasma marginale (strain St. Maries).